A 437-amino-acid chain; its full sequence is GTPase Obg (437 aa).

Residues 2–160 (SMFLDTAKIS…RQLELELKIL (159 aa)) form the Obg domain. Residues 161–338 (ADVGLVGFPS…LLEATAELLA (178 aa)) enclose the OBG-type G domain. GTP-binding positions include 167–174 (GFPSVGKS), 192–196 (FTTIV), 214–217 (DLPG), 284–287 (NKMD), and 319–321 (SSL). Residues serine 174 and threonine 194 each contribute to the Mg(2+) site. The OCT domain occupies 359–437 (GFAEAEKDFE…IGKFEFEFVD (79 aa)).

It belongs to the TRAFAC class OBG-HflX-like GTPase superfamily. OBG GTPase family. As to quaternary structure, monomer. Requires Mg(2+) as cofactor.

It is found in the cytoplasm. Functionally, an essential GTPase which binds GTP, GDP and possibly (p)ppGpp with moderate affinity, with high nucleotide exchange rates and a fairly low GTP hydrolysis rate. Plays a role in control of the cell cycle, stress response, ribosome biogenesis and in those bacteria that undergo differentiation, in morphogenesis control. The sequence is that of GTPase Obg from Streptococcus pyogenes serotype M18 (strain MGAS8232).